The primary structure comprises 295 residues: Glycine N-acyltransferase-like protein Keg1 (295 aa).

K41 carries the N6-acetyllysine; alternate modification. K41 bears the N6-succinyllysine; alternate mark. K43 carries the N6-acetyllysine modification. Position 48 is an N6-acetyllysine; alternate (K48). N6-succinyllysine; alternate is present on K48. K80 and K83 each carry N6-acetyllysine. N6-acetyllysine; alternate occurs at positions 124, 128, and 140. K124, K128, and K140 each carry N6-succinyllysine; alternate. Position 150 is an N6-acetyllysine (K150). At K255 the chain carries N6-acetyllysine; alternate. Position 255 is an N6-succinyllysine; alternate (K255).

It belongs to the glycine N-acyltransferase family. In terms of assembly, binds to microtubules. Specifically expressed in kidney and liver. Up-regulated in the regenerating liver as well as in hepatocellular carcinoma.

It is found in the cytoplasm. Its subcellular location is the cytoskeleton. It localises to the microtubule organizing center. The protein resides in the centrosome. The catalysed reaction is an acyl-CoA + glycine = an N-acylglycine + CoA + H(+). Functionally, acyltransferase which transfers the acyl group to the N-terminus of glycine. Can conjugate a multitude of substrates to form a variety of N-acylglycines. The protein is Glycine N-acyltransferase-like protein Keg1 (Keg1) of Rattus norvegicus (Rat).